Consider the following 139-residue polypeptide: S-adenosylmethionine decarboxylase proenzyme (139 aa).

Catalysis depends on Ser63, which acts as the Schiff-base intermediate with substrate; via pyruvic acid. Ser63 is modified (pyruvic acid (Ser); by autocatalysis). The active-site Proton acceptor; for processing activity is the His68. Cys83 functions as the Proton donor; for catalytic activity in the catalytic mechanism.

It belongs to the prokaryotic AdoMetDC family. Type 1 subfamily. As to quaternary structure, heterotetramer of two alpha and two beta chains arranged as a dimer of alpha/beta heterodimers. It depends on pyruvate as a cofactor. Is synthesized initially as an inactive proenzyme. Formation of the active enzyme involves a self-maturation process in which the active site pyruvoyl group is generated from an internal serine residue via an autocatalytic post-translational modification. Two non-identical subunits are generated from the proenzyme in this reaction, and the pyruvate is formed at the N-terminus of the alpha chain, which is derived from the carboxyl end of the proenzyme. The post-translation cleavage follows an unusual pathway, termed non-hydrolytic serinolysis, in which the side chain hydroxyl group of the serine supplies its oxygen atom to form the C-terminus of the beta chain, while the remainder of the serine residue undergoes an oxidative deamination to produce ammonia and the pyruvoyl group blocking the N-terminus of the alpha chain.

It catalyses the reaction S-adenosyl-L-methionine + H(+) = S-adenosyl 3-(methylsulfanyl)propylamine + CO2. The protein operates within amine and polyamine biosynthesis; S-adenosylmethioninamine biosynthesis; S-adenosylmethioninamine from S-adenosyl-L-methionine: step 1/1. Its function is as follows. Catalyzes the decarboxylation of S-adenosylmethionine to S-adenosylmethioninamine (dcAdoMet), the propylamine donor required for the synthesis of the polyamines spermine and spermidine from the diamine putrescine. This Pyrococcus abyssi (strain GE5 / Orsay) protein is S-adenosylmethionine decarboxylase proenzyme.